Here is a 212-residue protein sequence, read N- to C-terminus: Large ribosomal subunit protein bL25 (212 aa).

The tract at residues 1-25 (MSQSTIHKIAVKKRTETGKNENNRL) is disordered. Residues 13 to 24 (KRTETGKNENNR) show a composition bias toward basic and acidic residues.

The protein belongs to the bacterial ribosomal protein bL25 family. CTC subfamily. Part of the 50S ribosomal subunit; part of the 5S rRNA/L5/L18/L25 subcomplex. Contacts the 5S rRNA. Binds to the 5S rRNA independently of L5 and L18.

Its function is as follows. This is one of the proteins that binds to the 5S RNA in the ribosome where it forms part of the central protuberance. This chain is Large ribosomal subunit protein bL25, found in Leptospira borgpetersenii serovar Hardjo-bovis (strain L550).